We begin with the raw amino-acid sequence, 286 residues long: Ribonuclease H1 (286 aa).

The segment covering 101-115 (EPLDGDGHESAEPYA) has biased composition (basic and acidic residues). The segment at 101–127 (EPLDGDGHESAEPYAKHMKPSVEPAPP) is disordered. Positions 136 to 282 (MGDFVVVYTD…ADRLAREGAK (147 aa)) constitute an RNase H type-1 domain. Aspartate 145, glutamate 186, aspartate 210, and aspartate 274 together coordinate Mg(2+).

It belongs to the RNase H family. In terms of assembly, monomer. It depends on Mg(2+) as a cofactor. As to expression, ubiquitous.

It localises to the cytoplasm. It catalyses the reaction Endonucleolytic cleavage to 5'-phosphomonoester.. In the presence of magnesium, manganese is inhibitory. In terms of biological role, endonuclease that specifically degrades the RNA of RNA-DNA hybrids. Plays a role in RNA polymerase II (RNAp II) transcription termination by degrading R-loop RNA-DNA hybrid formation at G-rich pause sites located downstream of the poly(A) site and behind the elongating RNAp II. In Homo sapiens (Human), this protein is Ribonuclease H1 (RNASEH1).